The primary structure comprises 313 residues: Olfactory receptor 56A4 (313 aa).

Residues 1-28 (MASPSNDSTAPVSEFLLICFPNFQSWQH) are Extracellular-facing. The N-linked (GlcNAc...) asparagine glycan is linked to Asn-6. Residues 29–49 (WLSLPLSLLFLLAMGANTTLL) form a helical membrane-spanning segment. Residues 50 to 57 (ITIQLEAS) are Cytoplasmic-facing. A helical membrane pass occupies residues 58–78 (LHQPLYYLLSLLSLLDIVLCL). At 79–102 (TVIPKVLAIFWFDLRSISFPACFL) the chain is on the extracellular side. Cys-100 and Cys-192 form a disulfide bridge. A helical membrane pass occupies residues 103-123 (QMFIMNSFLTMESCTFMVMAY). Residues 124 to 142 (DRYVAICHPLRYPSIITDQ) lie on the Cytoplasmic side of the membrane. Residues 143–163 (FVARAVVFVIARNAFVSLPVP) form a helical membrane-spanning segment. The Extracellular portion of the chain corresponds to 164-199 (MLSARLRYCAGNIIKNCICSNLSVSKLSCDDITFNQ). A glycan (N-linked (GlcNAc...) asparagine) is linked at Asn-184. Residues 200-220 (LYQFVAGWTLLGSDLILIVIS) traverse the membrane as a helical segment. Over 221-240 (YSFILKVVLRIKAEGAVAKA) the chain is Cytoplasmic. A helical transmembrane segment spans residues 241–261 (LSTCGSHFILILFFSTVLLVL). Topologically, residues 262–276 (VITNLARKRIPPDVP) are extracellular. The helical transmembrane segment at 277–297 (ILLNILHHLIPPALNPIVYGV) threads the bilayer. Residues 298 to 313 (RTKEIKQGIQNLLKRL) lie on the Cytoplasmic side of the membrane.

Belongs to the G-protein coupled receptor 1 family.

It localises to the cell membrane. Functionally, odorant receptor. This Homo sapiens (Human) protein is Olfactory receptor 56A4 (OR56A4).